A 57-amino-acid chain; its full sequence is Large ribosomal subunit protein bL32c (57 aa).

The protein belongs to the bacterial ribosomal protein bL32 family.

It localises to the plastid. It is found in the chloroplast. In Phalaenopsis aphrodite subsp. formosana (Moth orchid), this protein is Large ribosomal subunit protein bL32c.